We begin with the raw amino-acid sequence, 416 residues long: Tyrosine--tRNA ligase (416 aa).

The short motif at 55–64 (PTGSEIHLGH) is the 'HIGH' region element. Positions 249–253 (KMSKS) match the 'KMSKS' region motif. K252 lines the ATP pocket. Positions 352 to 416 (TKAFHLLSSI…GKKTFRRISN (65 aa)) constitute an S4 RNA-binding domain.

It belongs to the class-I aminoacyl-tRNA synthetase family. TyrS type 2 subfamily. Homodimer.

It localises to the cytoplasm. The catalysed reaction is tRNA(Tyr) + L-tyrosine + ATP = L-tyrosyl-tRNA(Tyr) + AMP + diphosphate + H(+). Its function is as follows. Catalyzes the attachment of tyrosine to tRNA(Tyr) in a two-step reaction: tyrosine is first activated by ATP to form Tyr-AMP and then transferred to the acceptor end of tRNA(Tyr). This chain is Tyrosine--tRNA ligase, found in Prochlorococcus marinus (strain SARG / CCMP1375 / SS120).